Here is a 236-residue protein sequence, read N- to C-terminus: Small ribosomal subunit protein uS2c (236 aa).

Belongs to the universal ribosomal protein uS2 family.

It is found in the plastid. It localises to the chloroplast. The protein is Small ribosomal subunit protein uS2c (rps2) of Phaseolus vulgaris (Kidney bean).